We begin with the raw amino-acid sequence, 272 residues long: Undecaprenyl-diphosphatase (272 aa).

7 helical membrane-spanning segments follow: residues 42-62, 92-112, 120-140, 149-169, 194-214, 224-244, and 252-272; these read FGLS…VVFF, YLVL…EDFF, WVVV…EAVG, MGFA…VPGV, FLMS…EVLA, MFAV…RFFI, and LRAF…LLLL.

This sequence belongs to the UppP family.

Its subcellular location is the cell membrane. The catalysed reaction is di-trans,octa-cis-undecaprenyl diphosphate + H2O = di-trans,octa-cis-undecaprenyl phosphate + phosphate + H(+). Functionally, catalyzes the dephosphorylation of undecaprenyl diphosphate (UPP). Confers resistance to bacitracin. The protein is Undecaprenyl-diphosphatase of Rubrobacter xylanophilus (strain DSM 9941 / JCM 11954 / NBRC 16129 / PRD-1).